A 79-amino-acid polypeptide reads, in one-letter code: D-alanyl carrier protein (79 aa).

Positions 1–77 constitute a Carrier domain; the sequence is MDIKAEVIEI…KIVEGVTELR (77 aa). An O-(pantetheine 4'-phosphoryl)serine modification is found at Ser35.

The protein belongs to the DltC family. 4'-phosphopantetheine is transferred from CoA to a specific serine of apo-DCP.

The protein resides in the cytoplasm. It functions in the pathway cell wall biogenesis; lipoteichoic acid biosynthesis. Functionally, carrier protein involved in the D-alanylation of lipoteichoic acid (LTA). The loading of thioester-linked D-alanine onto DltC is catalyzed by D-alanine--D-alanyl carrier protein ligase DltA. The DltC-carried D-alanyl group is further transferred to cell membrane phosphatidylglycerol (PG) by forming an ester bond, probably catalyzed by DltD. D-alanylation of LTA plays an important role in modulating the properties of the cell wall in Gram-positive bacteria, influencing the net charge of the cell wall. This Streptococcus sanguinis (strain SK36) protein is D-alanyl carrier protein.